A 297-amino-acid chain; its full sequence is Cytidine deaminase (297 aa).

CMP/dCMP-type deaminase domains follow at residues 54 to 174 and 192 to 297; these read SSVE…FGPK and LRGD…YIEV. Position 95-97 (95-97) interacts with substrate; the sequence is NQE. Residue His108 participates in Zn(2+) binding. Catalysis depends on Glu110, which acts as the Proton donor. Zn(2+) contacts are provided by Cys135 and Cys138.

It belongs to the cytidine and deoxycytidylate deaminase family. As to quaternary structure, homodimer. Requires Zn(2+) as cofactor.

It catalyses the reaction cytidine + H2O + H(+) = uridine + NH4(+). It carries out the reaction 2'-deoxycytidine + H2O + H(+) = 2'-deoxyuridine + NH4(+). Its function is as follows. This enzyme scavenges exogenous and endogenous cytidine and 2'-deoxycytidine for UMP synthesis. This Actinobacillus pleuropneumoniae serotype 5b (strain L20) protein is Cytidine deaminase.